The sequence spans 359 residues: 4-hydroxy-3-methylbut-2-en-1-yl diphosphate synthase (flavodoxin) (359 aa).

Residues cysteine 265, cysteine 268, cysteine 300, and glutamate 307 each coordinate [4Fe-4S] cluster.

It belongs to the IspG family. It depends on [4Fe-4S] cluster as a cofactor.

The catalysed reaction is (2E)-4-hydroxy-3-methylbut-2-enyl diphosphate + oxidized [flavodoxin] + H2O + 2 H(+) = 2-C-methyl-D-erythritol 2,4-cyclic diphosphate + reduced [flavodoxin]. The protein operates within isoprenoid biosynthesis; isopentenyl diphosphate biosynthesis via DXP pathway; isopentenyl diphosphate from 1-deoxy-D-xylulose 5-phosphate: step 5/6. In terms of biological role, converts 2C-methyl-D-erythritol 2,4-cyclodiphosphate (ME-2,4cPP) into 1-hydroxy-2-methyl-2-(E)-butenyl 4-diphosphate. This Lawsonia intracellularis (strain PHE/MN1-00) protein is 4-hydroxy-3-methylbut-2-en-1-yl diphosphate synthase (flavodoxin).